We begin with the raw amino-acid sequence, 97 residues long: Defensin-A2 (97 aa).

Positions 1-19 (MRTLSLLLALLFLAAQTLA) are cleaved as a signal peptide. The propeptide occupies 20–61 (QPIDEGAEEVITEEPEITETQDPTTIMLIERGIGGDSTDATR). 3 cysteine pairs are disulfide-bonded: cysteine 66-cysteine 93, cysteine 68-cysteine 82, and cysteine 72-cysteine 92. The propeptide occupies 96 to 97 (TS).

It belongs to the alpha-defensin family. In terms of tissue distribution, highly expressed in intestine, expressed at lower levels in spleen, and at very low levels in kidney and lung.

The protein resides in the secreted. Functionally, has antimicrobial activity. This chain is Defensin-A2, found in Ornithorhynchus anatinus (Duckbill platypus).